The following is a 236-amino-acid chain: MSVPGPPRLVVALDFPAAAPAEALAAQLDPRLCRLKVGKELFTRAGPQLVERLHARGFEVFLDLKYHDIPNTVAGACRAAADLGVWMVNVHALGGRRMLEAAAEAVAAAEGRTLITAVTVLTSHDAATLEEIGLAGPPREAVLRLAGLAQASGLDGVVCSPEEAAAIGERFGAGLLRVTPGVRPAGAALGDQQRIATPAAAVAAGCDHLVVGRPITAAEDPAAAAAAIAAEIAAAG.

Substrate is bound by residues Asp14, Lys36, 63–72 (DLKYHDIPNT), Thr122, Arg183, Gln192, Gly212, and Arg213. Lys65 serves as the catalytic Proton donor.

It belongs to the OMP decarboxylase family. Type 1 subfamily. In terms of assembly, homodimer.

The catalysed reaction is orotidine 5'-phosphate + H(+) = UMP + CO2. Its pathway is pyrimidine metabolism; UMP biosynthesis via de novo pathway; UMP from orotate: step 2/2. Catalyzes the decarboxylation of orotidine 5'-monophosphate (OMP) to uridine 5'-monophosphate (UMP). The sequence is that of Orotidine 5'-phosphate decarboxylase from Halorhodospira halophila (strain DSM 244 / SL1) (Ectothiorhodospira halophila (strain DSM 244 / SL1)).